The chain runs to 550 residues: Chaperonin GroEL (550 aa).

ATP-binding positions include 30 to 33 (TLGP), lysine 51, 87 to 91 (DGTTT), glycine 415, and aspartate 497.

This sequence belongs to the chaperonin (HSP60) family. As to quaternary structure, forms a cylinder of 14 subunits composed of two heptameric rings stacked back-to-back. Interacts with the co-chaperonin GroES.

The protein localises to the cytoplasm. It carries out the reaction ATP + H2O + a folded polypeptide = ADP + phosphate + an unfolded polypeptide.. Together with its co-chaperonin GroES, plays an essential role in assisting protein folding. The GroEL-GroES system forms a nano-cage that allows encapsulation of the non-native substrate proteins and provides a physical environment optimized to promote and accelerate protein folding. The chain is Chaperonin GroEL from Yersinia enterocolitica.